Consider the following 191-residue polypeptide: Peptide methionine sulfoxide reductase (191 aa).

Disordered stretches follow at residues 1-20 (MASS…TPEN) and 168-191 (EKGG…KCYG).

This sequence belongs to the MsrA Met sulfoxide reductase family.

It catalyses the reaction L-methionyl-[protein] + [thioredoxin]-disulfide + H2O = L-methionyl-(S)-S-oxide-[protein] + [thioredoxin]-dithiol. The enzyme catalyses [thioredoxin]-disulfide + L-methionine + H2O = L-methionine (S)-S-oxide + [thioredoxin]-dithiol. In terms of biological role, has an important function as a repair enzyme for proteins that have been inactivated by oxidation. Catalyzes the reversible oxidation-reduction of methionine sulfoxide in proteins to methionine. The protein is Peptide methionine sulfoxide reductase of Fragaria ananassa (Strawberry).